Reading from the N-terminus, the 732-residue chain is Small conductance calcium-activated potassium channel protein 3 (732 aa).

Residues 1–11 (MDTSGHFHDSG) are compositionally biased toward basic and acidic residues. Disordered stretches follow at residues 1–82 (MDTS…QQAP) and 103–162 (HSSP…ASPL). Residues 35 to 59 (QPPPPSAPPAVPQQPPGPLLQPQPP) show a composition bias toward pro residues. The span at 60–82 (QLQQQQQQQQQQQQQQQQQQQAP) shows a compositional bias: low complexity. Over residues 113 to 133 (NSANSTAILHPSSRQGSQLNL) the composition is skewed to polar residues. Positions 139 to 148 (GHSPSSTATS) are enriched in low complexity. Residue Ser168 is modified to Phosphoserine. Over residues 241 to 257 (THNHQHAGTTAGSTTFP) the composition is skewed to polar residues. The interval 241–260 (THNHQHAGTTAGSTTFPKAN) is disordered. Residues 289-309 (LIFGMFGIVVMVIETELSWGL) traverse the membrane as a helical segment. The helical transmembrane segment at 316-336 (FSLALKCLISLSTIILLGLII) threads the bilayer. The chain crosses the membrane as a helical span at residues 367-387 (ISLEMLVCAIHPIPGEYKFFW). A helical membrane pass occupies residues 406–426 (IILSIPMFLRLYLIARVMLLH). A helical transmembrane segment spans residues 455–475 (LMTICPGTVLLVFSISLWIIA). Residues 495-515 (FLGAMWLISITFLSIGYGDMV) constitute an intramembrane region (pore-forming). The chain crosses the membrane as a helical span at residues 524-544 (VCLLTGIMGAGCTALVVAVVA). The calmodulin-binding stretch occupies residues 562–638 (DTQLTKRIKN…LVDLSKMQNV (77 aa)). Residues 643–670 (ITELNDRSEDLEKQIGSLESKLEHLTAS) adopt a coiled-coil conformation. Positions 704-732 (GTSHAPPSDSPIGISSTSFPTPYTSSSSC) are disordered. Residues 718-732 (SSTSFPTPYTSSSSC) show a composition bias toward low complexity.

The protein belongs to the potassium channel KCNN family. KCa2.3/KCNN3 subfamily. As to quaternary structure, homodimer. Heteromultimer with KCNN2 or KCNN1; this modulates plasma membrane expression and consequently the small conductance calcium-activated potassium channel activity. The complex is composed of 4 channel subunits each of which binds to a calmodulin subunit which regulates the channel activity through calcium-binding. Interacts with CALM1.

It localises to the cell membrane. Its subcellular location is the cytoplasm. The protein localises to the myofibril. The protein resides in the sarcomere. It is found in the z line. The enzyme catalyses K(+)(in) = K(+)(out). With respect to regulation, inhibited by bee venom neurotoxin apamin. Small conductance calcium-activated potassium channel that mediates the voltage-independent transmembrane transfer of potassium across the cell membrane through a constitutive interaction with calmodulin which binds the intracellular calcium allowing its opening. The current is characterized by a voltage-independent activation, an intracellular calcium concentration increase-dependent activation and a single-channel conductance of 10 picosiemens. Also presents an inwardly rectifying current, thus reducing its already small outward conductance of potassium ions, which is particularly the case when the membrane potential displays positive values, above + 20 mV. Activation is followed by membrane hyperpolarization. Thought to regulate neuronal excitability by contributing to the slow component of synaptic afterhyperpolarization. This chain is Small conductance calcium-activated potassium channel protein 3, found in Rattus norvegicus (Rat).